Consider the following 359-residue polypeptide: Photosystem II protein D1 3 (359 aa).

The next 3 helical transmembrane spans lie at 29-46 (YVGW…AATI), 118-133 (HFLI…EWEL), and 142-156 (WICV…AASA). His-118 contributes to the chlorophyll a binding site. Tyr-126 is a pheophytin a binding site. [CaMn4O5] cluster contacts are provided by Asp-170 and Glu-189. A helical membrane pass occupies residues 197–218 (FHMLGVAGVFGGSLFSAMHGSL). Residue His-198 participates in chlorophyll a binding. A quinone is bound by residues His-215 and 264 to 265 (SF). Residue His-215 participates in Fe cation binding. Fe cation is bound at residue His-272. A helical transmembrane segment spans residues 274-288 (FLAAWPVVGIWFTAL). Positions 332, 333, 342, and 344 each coordinate [CaMn4O5] cluster. A propeptide spanning residues 345–359 (AAESTPVALQVPAIG) is cleaved from the precursor.

The protein belongs to the reaction center PufL/M/PsbA/D family. As to quaternary structure, PSII is composed of 1 copy each of membrane proteins PsbA, PsbB, PsbC, PsbD, PsbE, PsbF, PsbH, PsbI, PsbJ, PsbK, PsbL, PsbM, PsbT, PsbX, PsbY, PsbZ, Psb30/Ycf12, peripheral proteins PsbO, CyanoQ (PsbQ), PsbU, PsbV and a large number of cofactors. It forms dimeric complexes. The cofactor is The D1/D2 heterodimer binds P680, chlorophylls that are the primary electron donor of PSII, and subsequent electron acceptors. It shares a non-heme iron and each subunit binds pheophytin, quinone, additional chlorophylls, carotenoids and lipids. D1 provides most of the ligands for the Mn4-Ca-O5 cluster of the oxygen-evolving complex (OEC). There is also a Cl(-1) ion associated with D1 and D2, which is required for oxygen evolution. The PSII complex binds additional chlorophylls, carotenoids and specific lipids.. Tyr-161 forms a radical intermediate that is referred to as redox-active TyrZ, YZ or Y-Z. In terms of processing, C-terminally processed by CtpA; processing is essential to allow assembly of the oxygen-evolving complex and thus photosynthetic growth.

Its subcellular location is the cellular thylakoid membrane. The enzyme catalyses 2 a plastoquinone + 4 hnu + 2 H2O = 2 a plastoquinol + O2. In terms of biological role, photosystem II (PSII) is a light-driven water:plastoquinone oxidoreductase that uses light energy to abstract electrons from H(2)O, generating O(2) and a proton gradient subsequently used for ATP formation. It consists of a core antenna complex that captures photons, and an electron transfer chain that converts photonic excitation into a charge separation. The D1/D2 (PsbA/PsbD) reaction center heterodimer binds P680, the primary electron donor of PSII as well as several subsequent electron acceptors. The protein is Photosystem II protein D1 3 of Parasynechococcus marenigrum (strain WH8102).